Reading from the N-terminus, the 834-residue chain is Copper-exporting P-type ATPase (834 aa).

HMA domains follow at residues 3–64 and 99–162; these read QTID…YDAS and DSQQ…YGAE. Cu(+) is bound by residues C14, C17, C110, and C113. 6 helical membrane-spanning segments follow: residues 187 to 207, 218 to 238, 254 to 274, 284 to 304, 438 to 458, and 464 to 484; these read WQAIVALAVGIPVMVWGMIGD, LWLVIGLITLAVMVFAGGHFY, TLVALGTGVAWLYSMSVNLWP, LYYEASAMIIGLINLGHMLEA, AVFVPVVVVIALVSAAIWYFF, and IVYTLVIATTVLIIACPCALG. D523 serves as the catalytic 4-aspartylphosphate intermediate. Mg(2+)-binding residues include D720 and D724. The next 2 membrane-spanning stretches (helical) occupy residues 779 to 799 and 801 to 821; these read LGAFIYNSIGIPVAAGILWPF and GTLLNPVVAGAAMALSSITVV.

This sequence belongs to the cation transport ATPase (P-type) (TC 3.A.3) family. Type IB subfamily.

It is found in the cell inner membrane. Its subcellular location is the cytoplasm. The catalysed reaction is Cu(+)(in) + ATP + H2O = Cu(+)(out) + ADP + phosphate + H(+). In terms of biological role, involved in Cu(+) export. Functionally, probably also encodes a cytoplasmic copper chaperone CopA(Z) that is produced by programmed ribosomal frameshifting. The polypeptide is Copper-exporting P-type ATPase (copA) (Escherichia coli O157:H7).